The following is a 236-amino-acid chain: Cytochrome c biogenesis ATP-binding export protein CcmA (236 aa).

Residues 14–235 (LEATGLQVAR…SAGDRVTGTE (222 aa)) enclose the ABC transporter domain. 46–53 (GANGSGKT) serves as a coordination point for ATP.

It belongs to the ABC transporter superfamily. CcmA exporter (TC 3.A.1.107) family. The complex is composed of two ATP-binding proteins (CcmA) and two transmembrane proteins (CcmB).

The protein localises to the cell inner membrane. The catalysed reaction is heme b(in) + ATP + H2O = heme b(out) + ADP + phosphate + H(+). In terms of biological role, part of the ABC transporter complex CcmAB involved in the biogenesis of c-type cytochromes; once thought to export heme, this seems not to be the case, but its exact role is uncertain. Responsible for energy coupling to the transport system. The chain is Cytochrome c biogenesis ATP-binding export protein CcmA from Alkalilimnicola ehrlichii (strain ATCC BAA-1101 / DSM 17681 / MLHE-1).